Consider the following 85-residue polypeptide: MKVTLIAILTCAAVLVLHTTAAEELKTESQLMEVGMPDTELATVDEERLFKCSVSCEIEKESNKDCKKKKCKGGWKCKFNMCVKV.

A signal peptide spans 1-22; that stretch reads MKVTLIAILTCAAVLVLHTTAA. The propeptide occupies 23–48; that stretch reads EELKTESQLMEVGMPDTELATVDEER. 3 cysteine pairs are disulfide-bonded: Cys52-Cys66, Cys56-Cys77, and Cys71-Cys82.

Belongs to the neurotoxin 12 (Hwtx-2) family. 02 (Hwtx-2) subfamily. In terms of tissue distribution, expressed by the venom gland.

Its subcellular location is the secreted. In terms of biological role, postsynaptic neurotoxin. The polypeptide is U4-theraphotoxin-Hhn1ad (Cyriopagopus hainanus (Chinese bird spider)).